A 692-amino-acid polypeptide reads, in one-letter code: Elongation factor G (692 aa).

The region spanning 8 to 282 (ENTRNIGIMA…AVIDYLPSPV (275 aa)) is the tr-type G domain. Residues 17–24 (AHIDAGKT), 81–85 (DTPGH), and 135–138 (NKMD) each bind GTP.

It belongs to the TRAFAC class translation factor GTPase superfamily. Classic translation factor GTPase family. EF-G/EF-2 subfamily.

It is found in the cytoplasm. Functionally, catalyzes the GTP-dependent ribosomal translocation step during translation elongation. During this step, the ribosome changes from the pre-translocational (PRE) to the post-translocational (POST) state as the newly formed A-site-bound peptidyl-tRNA and P-site-bound deacylated tRNA move to the P and E sites, respectively. Catalyzes the coordinated movement of the two tRNA molecules, the mRNA and conformational changes in the ribosome. In Lysinibacillus sphaericus (strain C3-41), this protein is Elongation factor G.